Here is a 338-residue protein sequence, read N- to C-terminus: Ketol-acid reductoisomerase (NADP(+)) (338 aa).

The 181-residue stretch at 1–181 (MKVFYDKDCD…GGGRAGIIET (181 aa)) folds into the KARI N-terminal Rossmann domain. Residues 24–27 (YGSQ), R47, and S52 contribute to the NADP(+) site. H107 is an active-site residue. G133 contacts NADP(+). Positions 182–327 (NFREETETDL…AKLRAMMPWI (146 aa)) constitute a KARI C-terminal knotted domain. The Mg(2+) site is built by D190, E194, E226, and E230. S251 is a binding site for substrate.

This sequence belongs to the ketol-acid reductoisomerase family. The cofactor is Mg(2+).

It carries out the reaction (2R)-2,3-dihydroxy-3-methylbutanoate + NADP(+) = (2S)-2-acetolactate + NADPH + H(+). It catalyses the reaction (2R,3R)-2,3-dihydroxy-3-methylpentanoate + NADP(+) = (S)-2-ethyl-2-hydroxy-3-oxobutanoate + NADPH + H(+). It participates in amino-acid biosynthesis; L-isoleucine biosynthesis; L-isoleucine from 2-oxobutanoate: step 2/4. Its pathway is amino-acid biosynthesis; L-valine biosynthesis; L-valine from pyruvate: step 2/4. Functionally, involved in the biosynthesis of branched-chain amino acids (BCAA). Catalyzes an alkyl-migration followed by a ketol-acid reduction of (S)-2-acetolactate (S2AL) to yield (R)-2,3-dihydroxy-isovalerate. In the isomerase reaction, S2AL is rearranged via a Mg-dependent methyl migration to produce 3-hydroxy-3-methyl-2-ketobutyrate (HMKB). In the reductase reaction, this 2-ketoacid undergoes a metal-dependent reduction by NADPH to yield (R)-2,3-dihydroxy-isovalerate. This is Ketol-acid reductoisomerase (NADP(+)) from Herminiimonas arsenicoxydans.